We begin with the raw amino-acid sequence, 64 residues long: Large ribosomal subunit protein bL33 (64 aa).

It belongs to the bacterial ribosomal protein bL33 family.

The chain is Large ribosomal subunit protein bL33 from Nostoc sp. (strain PCC 7120 / SAG 25.82 / UTEX 2576).